We begin with the raw amino-acid sequence, 243 residues long: Probable transcriptional regulatory protein Athe_0816 (243 aa).

This sequence belongs to the TACO1 family.

The protein localises to the cytoplasm. This Caldicellulosiruptor bescii (strain ATCC BAA-1888 / DSM 6725 / KCTC 15123 / Z-1320) (Anaerocellum thermophilum) protein is Probable transcriptional regulatory protein Athe_0816.